The following is a 669-amino-acid chain: Probable L-type lectin-domain containing receptor kinase I.2 (669 aa).

The first 24 residues, Met1–Gln24, serve as a signal peptide directing secretion. At Gln25–Pro295 the chain is on the extracellular side. Residues Asp26 to Ser266 are legume-lectin like. 4 N-linked (GlcNAc...) asparagine glycosylation sites follow: Asn132, Asn189, Asn212, and Asn233. A helical membrane pass occupies residues Leu296 to Tyr316. Topologically, residues Leu317–Arg669 are cytoplasmic. The 259-residue stretch at Phe351–Leu609 folds into the Protein kinase domain. ATP contacts are provided by residues Leu357 to Val365 and Lys379. Asp475 serves as the catalytic Proton acceptor.

In the C-terminal section; belongs to the protein kinase superfamily. Ser/Thr protein kinase family. This sequence in the N-terminal section; belongs to the leguminous lectin family.

Its subcellular location is the cell membrane. The catalysed reaction is L-seryl-[protein] + ATP = O-phospho-L-seryl-[protein] + ADP + H(+). It carries out the reaction L-threonyl-[protein] + ATP = O-phospho-L-threonyl-[protein] + ADP + H(+). Functionally, involved in resistance response to the pathogenic fungus Alternaria brassicicola. This is Probable L-type lectin-domain containing receptor kinase I.2 from Arabidopsis thaliana (Mouse-ear cress).